The primary structure comprises 185 residues: uncharacterized protein (185 aa).

The 161-residue stretch at 9-169 (VILELAKESD…NGREDDKPLL (161 aa)) folds into the N-acetyltransferase domain.

This is an uncharacterized protein from Bacillus subtilis (strain 168).